A 598-amino-acid polypeptide reads, in one-letter code: uncharacterized protein (598 aa).

Over residues 1-19 (MSVPLRFSTPSSSPSASDN) the composition is skewed to low complexity. Disordered regions lie at residues 1-54 (MSVP…MRPK), 139-176 (QKNQ…PNWK), and 194-279 (EAQL…ITMP). Over 1 to 313 (MSVPLRFSTP…CKIRHFFREG (313 aa)) the chain is Cytoplasmic. A compositionally biased stretch (polar residues) spans 30–48 (ELDTFNTTDVPRRVNTTKA). A compositionally biased stretch (low complexity) spans 147–165 (RANSRVNSRANSRANSSVS). Composition is skewed to polar residues over residues 218–242 (FSLQ…SSAI) and 255–276 (PRNN…SQDI). Residues 314–334 (FAEFLGTLVLVVFGVGSNLQA) traverse the membrane as a helical segment. Residues 335–346 (TVTNGAGGSFES) are Extracellular-facing. A helical membrane pass occupies residues 347–367 (LSFAWGFGCMLGVYIAGGISG). Residues 368 to 388 (GHVNPAVTISLAIFRKFPWYK) are Cytoplasmic-facing. The NPA 1 motif lies at 371–373 (NPA). Residues 389–409 (VPIYIFFQIWGAFFGGALAYG) form a helical membrane-spanning segment. The Extracellular portion of the chain corresponds to 410–444 (YHWSSITEFEGGKDIRTPATGGCLYTNPKPYVTWR). The chain crosses the membrane as a helical span at residues 445 to 465 (NAFFDEFIGTAVLVGCLFAIL). The Cytoplasmic segment spans residues 466–473 (DDTNSPPT). The chain crosses the membrane as a helical span at residues 474-494 (QGMTAFIVGLLIAAIGMALGY). At 495 to 532 (QTSFTLNPARDLGPRMFAWWIGYGPHSFHLYHWWWTWG) the chain is on the extracellular side. The NPA 2 signature appears at 501-503 (NPA). A helical transmembrane segment spans residues 533–553 (AWGGTIGGGIAGGLIYDLVIF). The Cytoplasmic portion of the chain corresponds to 554–598 (TGPESPLNYPDNGFIDKKVHQITAKFEKEEEVENLEKTDSPIENN).

This sequence belongs to the MIP/aquaporin (TC 1.A.8) family.

The protein localises to the membrane. This is an uncharacterized protein from Schizosaccharomyces pombe (strain 972 / ATCC 24843) (Fission yeast).